We begin with the raw amino-acid sequence, 531 residues long: MNRLLSSGMSAATLQTRMASQLLINDSKYGFLKELGLTENNAGVFHGKWAASGQVVQSFAPANNSPIANVQNGNVQDYEIAISEAKKAYNDWCEVPAPRRGEIVRQIGDKLRTQLQNLGKLVSLEMGKISAEGVGEVQEYVDICDYATGLSRSLEGKIFPSERPGHALLEQWNPLGVVGVISAFNFPCAVYGWNNALALVTGNSVVWKPAPSTPLTAIAVTKLVEEVLVANNVNPALCSLVCGEGDVGQALVKDKRVNLVSFTGSSEIGKIVGQQVQARFGKLLLELGGNNAIIVNEDADLNMVVPATVFAAVGTAGQRCTTTRRLIVHDKVYDQVLERLKKAYAQFESRIGCPLDSNTIIGPLHNQQAVGKYKASVAEAVASGGKIEYGGKVLERDGNFVLPTIVTGLKHDSPVVLRETFAPILYVLKFSTLEEAIAINNEVDQGLSSSLFTTNIQNVFKWMGPKGSDCGIVNVNIPTSGAEIGGAFGGEKETGGGRESGSDSWRQYMRRSTCTINYSKELPLAQGIKFE.

264–269 (GSSEIG) lines the NAD(+) pocket. The Proton acceptor role is filled by E286. The active-site Nucleophile is the C320.

It belongs to the aldehyde dehydrogenase family. Homotetramer.

The catalysed reaction is an aldehyde + NAD(+) + H2O = a carboxylate + NADH + 2 H(+). The protein is Putative aldehyde dehydrogenase family 7 member A1 homolog (alh-9) of Caenorhabditis elegans.